The following is a 461-amino-acid chain: Juvenile hormone epoxide hydrolase (461 aa).

The chain crosses the membrane as a helical span at residues 4-24 (LLFIALPLLVLASIPLYLLVL). The active-site Nucleophile is the Asp-227. Tyr-373 (proton donor) is an active-site residue. His-430 (proton acceptor) is an active-site residue.

The protein belongs to the peptidase S33 family. In terms of assembly, homodimer. In terms of tissue distribution, expressed in fat body, foregut and midgut but not in brain, subesophageal ganglia or silk gland of larvae on day 1 of fifth instar.

The protein resides in the microsome membrane. The protein localises to the endoplasmic reticulum membrane. The enzyme catalyses cis-stilbene oxide + H2O = (1R,2R)-hydrobenzoin. It carries out the reaction 1-(4-methoxyphenyl)-N-methyl-N-[(3-methyloxetan-3-yl)methyl]methanamine + H2O = 2-{[(4-methoxybenzyl)(methyl)amino]methyl}-2-methylpropane-1,3-diol. Functionally, catalyzes juvenile hormone hydrolysis. Degrades juvenile hormone III (JH III) about 3 times and 5 times slower than juvenile hormone I (JH I) and II (JH II), respectively. Degrades cis-stilbene oxide and trans-stilbene oxide about 18 and 43 times slower than JH III, respectively. In Bombyx mori (Silk moth), this protein is Juvenile hormone epoxide hydrolase.